A 251-amino-acid chain; its full sequence is Flap endonuclease Xni (251 aa).

Mg(2+) is bound at residue D104. In terms of domain architecture, 5'-3' exonuclease spans 160–249 (VLPRQLPDYW…IDGNLQQLRL (90 aa)). The K(+) site is built by L171, A172, P180, V182, and I185. An interaction with DNA region spans residues 184 to 189 (GIGPKS).

It belongs to the Xni family. Mg(2+) serves as cofactor. K(+) is required as a cofactor.

Has flap endonuclease activity. During DNA replication, flap endonucleases cleave the 5'-overhanging flap structure that is generated by displacement synthesis when DNA polymerase encounters the 5'-end of a downstream Okazaki fragment. The protein is Flap endonuclease Xni of Salmonella choleraesuis (strain SC-B67).